The primary structure comprises 102 residues: ATP synthase subunit c (102 aa).

Transmembrane regions (helical) follow at residues 34-54 and 80-100; these read IGAG…GYIF and AVSE…IFVA.

The protein belongs to the ATPase C chain family. As to quaternary structure, F-type ATPases have 2 components, F(1) - the catalytic core - and F(0) - the membrane proton channel. F(1) has five subunits: alpha(3), beta(3), gamma(1), delta(1), epsilon(1). F(0) has three main subunits: a(1), b(2) and c(10-14). The alpha and beta chains form an alternating ring which encloses part of the gamma chain. F(1) is attached to F(0) by a central stalk formed by the gamma and epsilon chains, while a peripheral stalk is formed by the delta and b chains.

It is found in the cell membrane. F(1)F(0) ATP synthase produces ATP from ADP in the presence of a proton or sodium gradient. F-type ATPases consist of two structural domains, F(1) containing the extramembraneous catalytic core and F(0) containing the membrane proton channel, linked together by a central stalk and a peripheral stalk. During catalysis, ATP synthesis in the catalytic domain of F(1) is coupled via a rotary mechanism of the central stalk subunits to proton translocation. In terms of biological role, key component of the F(0) channel; it plays a direct role in translocation across the membrane. A homomeric c-ring of between 10-14 subunits forms the central stalk rotor element with the F(1) delta and epsilon subunits. This is ATP synthase subunit c from Mycoplasma genitalium (strain ATCC 33530 / DSM 19775 / NCTC 10195 / G37) (Mycoplasmoides genitalium).